Reading from the N-terminus, the 330-residue chain is Tryptophan--tRNA ligase (330 aa).

ATP contacts are provided by residues 9–11 (QPT) and 17–18 (GN). Residues 10–18 (PTGDPHIGN) carry the 'HIGH' region motif. Asp-136 is a binding site for L-tryptophan. Residues 148–150 (GED), Ile-187, and 195–199 (KMSKS) contribute to the ATP site. The 'KMSKS' region signature appears at 195–199 (KMSKS).

The protein belongs to the class-I aminoacyl-tRNA synthetase family. In terms of assembly, homodimer.

The protein resides in the cytoplasm. It catalyses the reaction tRNA(Trp) + L-tryptophan + ATP = L-tryptophyl-tRNA(Trp) + AMP + diphosphate + H(+). In terms of biological role, catalyzes the attachment of tryptophan to tRNA(Trp). This is Tryptophan--tRNA ligase from Deinococcus radiodurans (strain ATCC 13939 / DSM 20539 / JCM 16871 / CCUG 27074 / LMG 4051 / NBRC 15346 / NCIMB 9279 / VKM B-1422 / R1).